Reading from the N-terminus, the 100-residue chain is Ribosomal processing cysteine protease Prp (100 aa).

Histidine 16 serves as the catalytic Proton donor. The active-site Nucleophile is the cysteine 28.

Belongs to the Prp family. As to quaternary structure, homodimer.

Its function is as follows. An essential cysteine protease that cleaves the N-terminus from ribosomal protein bL27. In Mycoplasma pneumoniae (strain ATCC 29342 / M129 / Subtype 1) (Mycoplasmoides pneumoniae), this protein is Ribosomal processing cysteine protease Prp.